The primary structure comprises 108 residues: Transcriptional activator HlyU (108 aa).

One can recognise an HTH arsR-type domain in the interval 13–107 (EMEKNSAKAV…LLHRLYCQAN (95 aa)). The segment at residues 47–66 (VGELSSRLELSQSALSQHLA) is a DNA-binding region (H-T-H motif).

Its function is as follows. Up-regulates the expression of the hemolysin gene, hlyA, and may promote expression of other virulence determinants in vivo. It may have both positive and negative regulator activities. In Vibrio cholerae serotype O1 (strain ATCC 39315 / El Tor Inaba N16961), this protein is Transcriptional activator HlyU (hlyU).